We begin with the raw amino-acid sequence, 526 residues long: Tyrosine-protein kinase transforming protein Src (526 aa).

Residues 1-15 are compositionally biased toward basic residues; the sequence is MGSSKSKPKGPSQRR. The interval 1 to 59 is disordered; that stretch reads MGSSKSKPKGPSQRRRSLEPPDSTHHGGFPASQTPNKTAAPDTHRTPSRSFGTVATEPK. A lipid anchor (N-myristoyl glycine; by host) is attached at Gly2. Residues 16 to 25 show a composition bias toward basic and acidic residues; that stretch reads RSLEPPDSTH. The region spanning 81-142 is the SH3 domain; that stretch reads GGVTTFVALY…PSNYVAPSDS (62 aa). Residues 148–245 form the SH2 domain; sequence WYFGKITRRE…GLCHRLTNVC (98 aa). One can recognise a Protein kinase domain in the interval 267–517; the sequence is LRLEVKLGQG…TFEYLQAQLL (251 aa). ATP-binding positions include 273-281 and Lys295; that span reads LGQGCFGEV. The active-site Proton acceptor is the Asp386. Tyr416 carries the phosphotyrosine; by autocatalysis modification.

It belongs to the protein kinase superfamily. Tyr protein kinase family. SRC subfamily. As to quaternary structure, homodimer. Post-translationally, the phosphorylated form is termed pp60v-src.

It catalyses the reaction L-tyrosyl-[protein] + ATP = O-phospho-L-tyrosyl-[protein] + ADP + H(+). Functionally, this phosphoprotein, required for both the initiation and the maintenance of neoplastic transformation, is a protein kinase that catalyzes the phosphorylation of tyrosine residues in vitro. This Rous sarcoma virus subgroup E (strain Schmidt-Ruppin) (RSV-SR-E) protein is Tyrosine-protein kinase transforming protein Src (V-SRC).